A 401-amino-acid chain; its full sequence is Probable tRNA sulfurtransferase (401 aa).

One can recognise a THUMP domain in the interval 60-165 (EALFPHLKQV…EEATFLTIRD (106 aa)). ATP contacts are provided by residues 183 to 184 (ML), 208 to 209 (HF), arginine 265, glycine 287, and glutamine 296.

It belongs to the ThiI family.

The protein resides in the cytoplasm. It catalyses the reaction [ThiI sulfur-carrier protein]-S-sulfanyl-L-cysteine + a uridine in tRNA + 2 reduced [2Fe-2S]-[ferredoxin] + ATP + H(+) = [ThiI sulfur-carrier protein]-L-cysteine + a 4-thiouridine in tRNA + 2 oxidized [2Fe-2S]-[ferredoxin] + AMP + diphosphate. It carries out the reaction [ThiS sulfur-carrier protein]-C-terminal Gly-Gly-AMP + S-sulfanyl-L-cysteinyl-[cysteine desulfurase] + AH2 = [ThiS sulfur-carrier protein]-C-terminal-Gly-aminoethanethioate + L-cysteinyl-[cysteine desulfurase] + A + AMP + 2 H(+). It functions in the pathway cofactor biosynthesis; thiamine diphosphate biosynthesis. In terms of biological role, catalyzes the ATP-dependent transfer of a sulfur to tRNA to produce 4-thiouridine in position 8 of tRNAs, which functions as a near-UV photosensor. Also catalyzes the transfer of sulfur to the sulfur carrier protein ThiS, forming ThiS-thiocarboxylate. This is a step in the synthesis of thiazole, in the thiamine biosynthesis pathway. The sulfur is donated as persulfide by IscS. In Bacillus subtilis (strain 168), this protein is Probable tRNA sulfurtransferase.